The sequence spans 503 residues: Poxin-Schlafen (503 aa).

The active-site Proton donor is His-15. The active-site Shared with catalytic histidine of dimeric partner is the Tyr-136. The Proton acceptor; shared with catalytic histidine of dimeric partner role is filled by Lys-140.

It in the N-terminal section; belongs to the poxin family. In the C-terminal section; belongs to the Schlafen protein family. Subgroup poxviridae B3 subfamily. In terms of assembly, homodimer.

It carries out the reaction 2',3'-cGAMP + H2O = Gp(2'-5')Ap(3') + H(+). Nuclease that is responsible for viral evasion of host cGAS-STING innate immunity. Cleaves 2',3'-cGAMP which is produced by host cGAS following recognition of cytosolic DNA and blocks the subsequent 2',3'-cGAMP-mediated activation of TMEM173/STING, which normally spreads to adjacent cells and activates the interferon and NF-kappa-B immune responses. The protein is Poxin-Schlafen (OPG188) of Cynomys gunnisoni (Gunnison's prairie dog).